A 548-amino-acid chain; its full sequence is Probable malate:quinone oxidoreductase (548 aa).

It belongs to the MQO family. FAD is required as a cofactor.

It carries out the reaction (S)-malate + a quinone = a quinol + oxaloacetate. It functions in the pathway carbohydrate metabolism; tricarboxylic acid cycle; oxaloacetate from (S)-malate (quinone route): step 1/1. In Escherichia coli O6:H1 (strain CFT073 / ATCC 700928 / UPEC), this protein is Probable malate:quinone oxidoreductase.